Here is a 280-residue protein sequence, read N- to C-terminus: Probable endonuclease 4 (280 aa).

Zn(2+) is bound by residues H69, H109, E145, D179, H182, H216, D229, H231, and E261.

It belongs to the AP endonuclease 2 family. The cofactor is Zn(2+).

It catalyses the reaction Endonucleolytic cleavage to 5'-phosphooligonucleotide end-products.. Functionally, endonuclease IV plays a role in DNA repair. It cleaves phosphodiester bonds at apurinic or apyrimidinic (AP) sites, generating a 3'-hydroxyl group and a 5'-terminal sugar phosphate. This is Probable endonuclease 4 from Actinobacillus pleuropneumoniae serotype 7 (strain AP76).